We begin with the raw amino-acid sequence, 120 residues long: NAD(P)H-quinone oxidoreductase subunit 3, chloroplastic (120 aa).

3 helical membrane-spanning segments follow: residues 10–30 (FWAF…TSSL), 64–84 (MFAL…PWAM), and 89–109 (LGVL…IGLV).

Belongs to the complex I subunit 3 family. In terms of assembly, NDH is composed of at least 16 different subunits, 5 of which are encoded in the nucleus.

It localises to the plastid. It is found in the chloroplast thylakoid membrane. It carries out the reaction a plastoquinone + NADH + (n+1) H(+)(in) = a plastoquinol + NAD(+) + n H(+)(out). The enzyme catalyses a plastoquinone + NADPH + (n+1) H(+)(in) = a plastoquinol + NADP(+) + n H(+)(out). Its function is as follows. NDH shuttles electrons from NAD(P)H:plastoquinone, via FMN and iron-sulfur (Fe-S) centers, to quinones in the photosynthetic chain and possibly in a chloroplast respiratory chain. The immediate electron acceptor for the enzyme in this species is believed to be plastoquinone. Couples the redox reaction to proton translocation, and thus conserves the redox energy in a proton gradient. This is NAD(P)H-quinone oxidoreductase subunit 3, chloroplastic from Zygnema circumcarinatum (Green alga).